Reading from the N-terminus, the 464-residue chain is Plant intracellular Ras-group-related LRR protein 3 (464 aa).

Residues 106 to 138 (AAVVSLEEVHEGYEKQLRDLEEEIGRVYASAVE) are a coiled coil. LRR repeat units lie at residues 160–183 (GGVV…LGKI), 184–206 (VGLV…ISGL), 207–230 (EKLE…GLLL), 232–252 (LRIL…IAQC), 254–275 (SLVE…FGYG), 276–299 (LLNL…ICEM), 301–322 (SLRY…IGRL), 323–347 (TNLE…ISDL), 348–370 (ANLR…FFRL), and 372–393 (KLEK…MVNQ). The short motif at 398–406 (VREFMRKRW) is the GVYW; degenerate element.

Belongs to the SHOC2 family. In terms of tissue distribution, widely expressed.

Functionally, leucine-rich repeat protein that likely mediates protein interactions, possibly in the context of signal transduction. The polypeptide is Plant intracellular Ras-group-related LRR protein 3 (PIRL3) (Arabidopsis thaliana (Mouse-ear cress)).